We begin with the raw amino-acid sequence, 331 residues long: tRNA N6-adenosine threonylcarbamoyltransferase (331 aa).

Fe cation-binding residues include histidine 108 and histidine 112. Residues 129–133, aspartate 161, glutamate 178, and serine 258 each bind substrate; that span reads LVSGG. Aspartate 286 provides a ligand contact to Fe cation.

Belongs to the KAE1 / TsaD family. It depends on Fe(2+) as a cofactor.

Its subcellular location is the cytoplasm. The catalysed reaction is L-threonylcarbamoyladenylate + adenosine(37) in tRNA = N(6)-L-threonylcarbamoyladenosine(37) in tRNA + AMP + H(+). Functionally, required for the formation of a threonylcarbamoyl group on adenosine at position 37 (t(6)A37) in tRNAs that read codons beginning with adenine. Is probably involved in the transfer of the threonylcarbamoyl moiety of threonylcarbamoyl-AMP (TC-AMP) to the N6 group of A37. In Caldivirga maquilingensis (strain ATCC 700844 / DSM 13496 / JCM 10307 / IC-167), this protein is tRNA N6-adenosine threonylcarbamoyltransferase.